The chain runs to 314 residues: MEIILANPRGFCAGVHRAISIVDRALDIFTPPIYVRHEVVHNQYVVDDLRARGAVFVEELDEVPENSIVIFSAHGVAQSVRAEAKRRDLKIFDATCPLVTKVHMEVTRASRRGQECILIGHQGHPEVVGTMGQYDNPQGGIYLIESPEDIKKLEVKNPNSLCFSSQTTLSVDDTANIIKALREKFPKIDGPRKDDICYATQNRQDAVKALAERSDLVLVVGSTNSSNSNRLQEKASCVGVNAYLIDSEKDIKTEWLENVKVVGVTAGASAPEVLVKEVIARLKKLGGTVVTENLGVEENIIFEVPAELRIKQID.

Position 12 (cysteine 12) interacts with [4Fe-4S] cluster. (2E)-4-hydroxy-3-methylbut-2-enyl diphosphate is bound by residues histidine 41 and histidine 74. Histidine 41 and histidine 74 together coordinate dimethylallyl diphosphate. Residues histidine 41 and histidine 74 each contribute to the isopentenyl diphosphate site. Cysteine 96 lines the [4Fe-4S] cluster pocket. Histidine 124 contributes to the (2E)-4-hydroxy-3-methylbut-2-enyl diphosphate binding site. Histidine 124 is a dimethylallyl diphosphate binding site. Isopentenyl diphosphate is bound at residue histidine 124. Glutamate 126 functions as the Proton donor in the catalytic mechanism. (2E)-4-hydroxy-3-methylbut-2-enyl diphosphate is bound at residue threonine 167. Cysteine 197 is a [4Fe-4S] cluster binding site. The (2E)-4-hydroxy-3-methylbut-2-enyl diphosphate site is built by serine 225, serine 226, asparagine 227, and serine 269. Residues serine 225, serine 226, asparagine 227, and serine 269 each coordinate dimethylallyl diphosphate. Serine 225, serine 226, asparagine 227, and serine 269 together coordinate isopentenyl diphosphate.

This sequence belongs to the IspH family. [4Fe-4S] cluster serves as cofactor.

The enzyme catalyses isopentenyl diphosphate + 2 oxidized [2Fe-2S]-[ferredoxin] + H2O = (2E)-4-hydroxy-3-methylbut-2-enyl diphosphate + 2 reduced [2Fe-2S]-[ferredoxin] + 2 H(+). It carries out the reaction dimethylallyl diphosphate + 2 oxidized [2Fe-2S]-[ferredoxin] + H2O = (2E)-4-hydroxy-3-methylbut-2-enyl diphosphate + 2 reduced [2Fe-2S]-[ferredoxin] + 2 H(+). It functions in the pathway isoprenoid biosynthesis; dimethylallyl diphosphate biosynthesis; dimethylallyl diphosphate from (2E)-4-hydroxy-3-methylbutenyl diphosphate: step 1/1. The protein operates within isoprenoid biosynthesis; isopentenyl diphosphate biosynthesis via DXP pathway; isopentenyl diphosphate from 1-deoxy-D-xylulose 5-phosphate: step 6/6. Catalyzes the conversion of 1-hydroxy-2-methyl-2-(E)-butenyl 4-diphosphate (HMBPP) into a mixture of isopentenyl diphosphate (IPP) and dimethylallyl diphosphate (DMAPP). Acts in the terminal step of the DOXP/MEP pathway for isoprenoid precursor biosynthesis. The polypeptide is 4-hydroxy-3-methylbut-2-enyl diphosphate reductase (Psychromonas ingrahamii (strain DSM 17664 / CCUG 51855 / 37)).